The sequence spans 146 residues: Large ribosomal subunit protein uL15 (146 aa).

The disordered stretch occupies residues 1-58; that stretch reads MNLSELRPAPGARKKPTRKGQGIGSGLGKTAGKGHKGQNARSGGGVRPGFEGGQMPLQ. Composition is skewed to gly residues over residues 21–31 and 42–52; these read QGIGSGLGKTA and SGGGVRPGFEG.

It belongs to the universal ribosomal protein uL15 family. In terms of assembly, part of the 50S ribosomal subunit.

Binds to the 23S rRNA. The polypeptide is Large ribosomal subunit protein uL15 (Desulforamulus reducens (strain ATCC BAA-1160 / DSM 100696 / MI-1) (Desulfotomaculum reducens)).